Reading from the N-terminus, the 179-residue chain is Large ribosomal subunit protein uL5 (179 aa).

The protein belongs to the universal ribosomal protein uL5 family. As to quaternary structure, part of the 50S ribosomal subunit; part of the 5S rRNA/L5/L18/L25 subcomplex. Contacts the 5S rRNA and the P site tRNA. Forms a bridge to the 30S subunit in the 70S ribosome.

In terms of biological role, this is one of the proteins that bind and probably mediate the attachment of the 5S RNA into the large ribosomal subunit, where it forms part of the central protuberance. In the 70S ribosome it contacts protein S13 of the 30S subunit (bridge B1b), connecting the 2 subunits; this bridge is implicated in subunit movement. Contacts the P site tRNA; the 5S rRNA and some of its associated proteins might help stabilize positioning of ribosome-bound tRNAs. The chain is Large ribosomal subunit protein uL5 from Thiobacillus denitrificans (strain ATCC 25259 / T1).